A 379-amino-acid polypeptide reads, in one-letter code: UDP-N-acetylglucosamine--N-acetylmuramyl-(pentapeptide) pyrophosphoryl-undecaprenol N-acetylglucosamine transferase (379 aa).

UDP-N-acetyl-alpha-D-glucosamine-binding positions include threonine 17–glycine 19, asparagine 128, arginine 169, serine 197, and glutamine 298.

It belongs to the glycosyltransferase 28 family. MurG subfamily.

It localises to the cell inner membrane. It carries out the reaction di-trans,octa-cis-undecaprenyl diphospho-N-acetyl-alpha-D-muramoyl-L-alanyl-D-glutamyl-meso-2,6-diaminopimeloyl-D-alanyl-D-alanine + UDP-N-acetyl-alpha-D-glucosamine = di-trans,octa-cis-undecaprenyl diphospho-[N-acetyl-alpha-D-glucosaminyl-(1-&gt;4)]-N-acetyl-alpha-D-muramoyl-L-alanyl-D-glutamyl-meso-2,6-diaminopimeloyl-D-alanyl-D-alanine + UDP + H(+). The protein operates within cell wall biogenesis; peptidoglycan biosynthesis. Cell wall formation. Catalyzes the transfer of a GlcNAc subunit on undecaprenyl-pyrophosphoryl-MurNAc-pentapeptide (lipid intermediate I) to form undecaprenyl-pyrophosphoryl-MurNAc-(pentapeptide)GlcNAc (lipid intermediate II). The chain is UDP-N-acetylglucosamine--N-acetylmuramyl-(pentapeptide) pyrophosphoryl-undecaprenol N-acetylglucosamine transferase from Brucella suis biovar 1 (strain 1330).